The sequence spans 315 residues: tRNA dimethylallyltransferase (315 aa).

G13–S20 is a binding site for ATP. Residue T15–S20 coordinates substrate. Interaction with substrate tRNA stretches follow at residues D38 to Q41 and Q162 to R166.

Belongs to the IPP transferase family. In terms of assembly, monomer. Mg(2+) is required as a cofactor.

It carries out the reaction adenosine(37) in tRNA + dimethylallyl diphosphate = N(6)-dimethylallyladenosine(37) in tRNA + diphosphate. Catalyzes the transfer of a dimethylallyl group onto the adenine at position 37 in tRNAs that read codons beginning with uridine, leading to the formation of N6-(dimethylallyl)adenosine (i(6)A). This Paramagnetospirillum magneticum (strain ATCC 700264 / AMB-1) (Magnetospirillum magneticum) protein is tRNA dimethylallyltransferase.